A 793-amino-acid polypeptide reads, in one-letter code: uncharacterized protein (793 aa).

Residues 1-22 form the signal peptide; it reads MKFKYGAIFFSGFLGLSAILAA. Cys-23 carries N-palmitoyl cysteine lipidation. Cys-23 is lipidated: S-diacylglycerol cysteine. 3 disordered regions span residues 181 to 200, 212 to 264, and 444 to 504; these read LNQK…TLTV, KIED…DDQV, and KAPS…SNNN. Positions 212–227 are enriched in basic and acidic residues; it reads KIEDSAKANGKSDEKG. A compositionally biased stretch (polar residues) spans 237–246; that stretch reads ATFSLVQLKQ. Basic and acidic residues predominate over residues 247-264; that stretch reads TQEKTDDSQDTKNSDDQV. Positions 449–468 are enriched in polar residues; sequence NGENGQTNEGNSTNGEQNLL. The segment covering 472–485 has biased composition (basic and acidic residues); that stretch reads EVKDDSKPKEEVKS. Low complexity predominate over residues 491-504; that stretch reads KESSQNQGKKSNNN.

This sequence belongs to the MG185/MG260 family.

It is found in the cell membrane. This is an uncharacterized protein from Mycoplasma pneumoniae (strain ATCC 29342 / M129 / Subtype 1) (Mycoplasmoides pneumoniae).